The following is a 451-amino-acid chain: Spermidine sinapoyl-CoA acyltransferase (451 aa).

Spermidine is bound by residues Y47, H169, S294, D316, and L378. H169 serves as the catalytic Proton acceptor. The active-site Proton acceptor is D391.

This sequence belongs to the plant acyltransferase family. In terms of assembly, monomer. As to expression, predominantly expressed in siliques, especially in seeds around the embryo, and, at low levels, in flowers. Barely detectable in stems, leaves, and roots.

The catalysed reaction is 2 (E)-sinapoyl-CoA + spermidine = N(1),N(8)-bis[(E)-sinapoyl]-spermidine + 2 CoA + 2 H(+). It functions in the pathway amine and polyamine metabolism; spermidine metabolism. Its function is as follows. Spermidine sinapoyl-CoA acyltransferase that mediates the accumulation of disinapoyl spermidine conjugates in seeds. Catalyzes the two conjugating steps required for the biosynthesis of N1,N8-disipanoyl-spermidine. Can also use putrescine as an acyl acceptor to convert it into monosinapoyl-putrescine. This chain is Spermidine sinapoyl-CoA acyltransferase, found in Arabidopsis thaliana (Mouse-ear cress).